The sequence spans 256 residues: 7-cyano-7-deazaguanine synthase (256 aa).

The disordered stretch occupies residues 1–22 (MTDASADALTSPSNSGASQDTS). Positions 8–22 (ALTSPSNSGASQDTS) are enriched in polar residues. 30 to 40 (LSGGLDSVTCL) is an ATP binding site. Positions 220, 230, 233, and 236 each coordinate Zn(2+).

It belongs to the QueC family. Zn(2+) is required as a cofactor.

The enzyme catalyses 7-carboxy-7-deazaguanine + NH4(+) + ATP = 7-cyano-7-deazaguanine + ADP + phosphate + H2O + H(+). It participates in purine metabolism; 7-cyano-7-deazaguanine biosynthesis. Functionally, catalyzes the ATP-dependent conversion of 7-carboxy-7-deazaguanine (CDG) to 7-cyano-7-deazaguanine (preQ(0)). This chain is 7-cyano-7-deazaguanine synthase, found in Psychrobacter sp. (strain PRwf-1).